The following is a 482-amino-acid chain: L-propargylglycine--L-glutamate ligase (482 aa).

It catalyses the reaction L-propargylglycine + L-glutamate + ATP = L-gamma-glutamyl-L-propargylglycine + ADP + phosphate + H(+). It participates in amino-acid metabolism. The protein operates within antibiotic biosynthesis. Its function is as follows. Involved in the biosynthesis of terminal alkyne-containing amino acids such as L-beta-ethynylserine, that are produced as antibiotics by S.cattleya. Catalyzes the ATP-dependent ligation of L-propargylglycine to L-glutamate to form the dipeptide L-gamma-glutamyl-L-propargylglycine. Is selective for L-propargylglycine over norvaline, allylglycine and the standard proteinogenic amino acids, except L-cysteine which can be used as a substrate to a lesser extent. The protein is L-propargylglycine--L-glutamate ligase of Streptantibioticus cattleyicolor (strain ATCC 35852 / DSM 46488 / JCM 4925 / NBRC 14057 / NRRL 8057) (Streptomyces cattleya).